The sequence spans 146 residues: VHLTGEEKSTVSALWGKVNVEEIGGEALGRLLVVYPWTQRFFDSFGDLSSPSAVFGNAKVKSHGKKVLDSFSNGMQHLDNLKGTFAKLSELHCDKLHVDPENFRLLGNVLVVVLARNFGKEFTPQVQAAYQKVVAGVATALAHKYH.

Residue V1 is modified to N-acetylvaline. In terms of domain architecture, Globin spans 2–146 (HLTGEEKSTV…VATALAHKYH (145 aa)). S44 carries the phosphoserine modification. K59 carries the N6-acetyllysine modification. Heme b is bound at residue H63. The residue at position 82 (K82) is an N6-acetyllysine. Residue H92 participates in heme b binding. S-nitrosocysteine is present on C93. N6-acetyllysine is present on K144.

This sequence belongs to the globin family. Heterotetramer of two alpha chains and two beta chains. In terms of tissue distribution, red blood cells.

Involved in oxygen transport from the lung to the various peripheral tissues. In Macrotus californicus (Californian leaf-nosed bat), this protein is Hemoglobin subunit beta (HBB).